The chain runs to 72 residues: uncharacterized protein (72 aa).

This is an uncharacterized protein from Homo sapiens (Human).